We begin with the raw amino-acid sequence, 382 residues long: Anhydro-N-acetylmuramic acid kinase (382 aa).

9–16 contributes to the ATP binding site; it reads GTSLDGID.

This sequence belongs to the anhydro-N-acetylmuramic acid kinase family.

It carries out the reaction 1,6-anhydro-N-acetyl-beta-muramate + ATP + H2O = N-acetyl-D-muramate 6-phosphate + ADP + H(+). It participates in amino-sugar metabolism; 1,6-anhydro-N-acetylmuramate degradation. The protein operates within cell wall biogenesis; peptidoglycan recycling. In terms of biological role, catalyzes the specific phosphorylation of 1,6-anhydro-N-acetylmuramic acid (anhMurNAc) with the simultaneous cleavage of the 1,6-anhydro ring, generating MurNAc-6-P. Is required for the utilization of anhMurNAc either imported from the medium or derived from its own cell wall murein, and thus plays a role in cell wall recycling. The protein is Anhydro-N-acetylmuramic acid kinase of Bacillus cereus (strain AH820).